Here is a 186-residue protein sequence, read N- to C-terminus: MAARLLRVASAALGDTAGRWRLLARPRAGAGGLRGSRGPGLGGGAVATRTLSVSGRAQSSSEDKITVHFINRDGETLTTKGKIGDSLLDVVVQNNLDIDGFGACEGTLACSTCHLIFEQHIFEKLEAITDEENDMLDLAYGLTDRSRLGCQICLTKAMDNMTVRVPDAVSDARESIDMGMNSSKIE.

Residues 1-58 (MAARLLRVASAALGDTAGRWRLLARPRAGAGGLRGSRGPGLGGGAVATRTLSVSGRAQ) constitute a mitochondrion transit peptide. Ser-61 is subject to Phosphoserine. Lys-64 is subject to N6-acetyllysine; alternate. Lys-64 carries the post-translational modification N6-succinyllysine; alternate. One can recognise a 2Fe-2S ferredoxin-type domain in the interval 65–169 (ITVHFINRDG…NMTVRVPDAV (105 aa)). [2Fe-2S] cluster contacts are provided by Cys-104, Cys-110, Cys-113, and Cys-150. An N6-succinyllysine modification is found at Lys-156. Residue Ser-175 is modified to Phosphoserine.

The protein belongs to the adrenodoxin/putidaredoxin family. As to quaternary structure, interacts with CYP11A1. [2Fe-2S] cluster is required as a cofactor. In terms of tissue distribution, detected in adrenal cortex and corpus luteum (at protein level).

The protein localises to the mitochondrion matrix. In terms of biological role, essential for the synthesis of various steroid hormones. Participates in the reduction of mitochondrial cytochrome P450 for steroidogenesis. Transfers electrons from adrenodoxin reductase to CYP11A1, a cytochrome P450 that catalyzes cholesterol side-chain cleavage to produce pregnenolone, the precursor of most steroid hormones. Does not form a ternary complex with adrenodoxin reductase and CYP11A1 but shuttles between the two enzymes to transfer electrons. This chain is Adrenodoxin, mitochondrial (FDX1), found in Bos taurus (Bovine).